Consider the following 254-residue polypeptide: 3-oxo-5-alpha-steroid 4-dehydrogenase 2 (254 aa).

The next 4 membrane-spanning stretches (helical) occupy residues 8–28, 72–92, 146–166, and 206–226; these read SPVLAGSATLVALGALALYVA, PLSLFGPPGTVLLGLFCLHYF, FSLGVFLFILGMGINIHSDYI, and LATWSLPALAFAFFSLCFLGL.

This sequence belongs to the steroid 5-alpha reductase family. As to expression, expressed in high levels in the prostate and many other androgen-sensitive tissues.

It is found in the microsome membrane. The protein localises to the endoplasmic reticulum membrane. It carries out the reaction a 3-oxo-5alpha-steroid + NADP(+) = a 3-oxo-Delta(4)-steroid + NADPH + H(+). The enzyme catalyses 17beta-hydroxy-5alpha-androstan-3-one + NADP(+) = testosterone + NADPH + H(+). The catalysed reaction is 5alpha-pregnane-3,20-dione + NADP(+) = progesterone + NADPH + H(+). In terms of biological role, converts testosterone (T) into 5-alpha-dihydrotestosterone (DHT) and progesterone or corticosterone into their corresponding 5-alpha-3-oxosteroids. It plays a central role in sexual differentiation and androgen physiology. This Homo sapiens (Human) protein is 3-oxo-5-alpha-steroid 4-dehydrogenase 2 (SRD5A2).